A 167-amino-acid polypeptide reads, in one-letter code: Small ribosomal subunit protein uS5 (167 aa).

The 64-residue stretch at 12 to 75 (LQEKLIAVNR…EKARRNMVTV (64 aa)) folds into the S5 DRBM domain.

Belongs to the universal ribosomal protein uS5 family. As to quaternary structure, part of the 30S ribosomal subunit. Contacts proteins S4 and S8.

Functionally, with S4 and S12 plays an important role in translational accuracy. Located at the back of the 30S subunit body where it stabilizes the conformation of the head with respect to the body. The protein is Small ribosomal subunit protein uS5 of Shewanella sp. (strain W3-18-1).